The following is a 29-amino-acid chain: ATP synthase subunit 9, mitochondrial (29 aa).

Belongs to the ATPase C chain family. In terms of assembly, F-type ATPases have 2 components, CF(1) - the catalytic core - and CF(0) - the membrane proton channel. CF(1) has five subunits: alpha(3), beta(3), gamma(1), delta(1), epsilon(1). CF(0) has three main subunits: a, b and c.

The protein localises to the mitochondrion membrane. Mitochondrial membrane ATP synthase (F(1)F(0) ATP synthase or Complex V) produces ATP from ADP in the presence of a proton gradient across the membrane which is generated by electron transport complexes of the respiratory chain. F-type ATPases consist of two structural domains, F(1) - containing the extramembraneous catalytic core and F(0) - containing the membrane proton channel, linked together by a central stalk and a peripheral stalk. During catalysis, ATP synthesis in the catalytic domain of F(1) is coupled via a rotary mechanism of the central stalk subunits to proton translocation. Part of the complex F(0) domain. A homomeric c-ring of probably 10 subunits is part of the complex rotary element. The polypeptide is ATP synthase subunit 9, mitochondrial (ATP9) (Wickerhamomyces pijperi (Yeast)).